A 454-amino-acid polypeptide reads, in one-letter code: Bleomycin hydrolase (454 aa).

Methionine 1 is modified (N-acetylmethionine). Active-site residues include cysteine 73 and histidine 372. Lysine 391 is modified (N6-acetyllysine). Asparagine 396 is a catalytic residue.

The protein belongs to the peptidase C1 family. Homohexamer. Interacts with NUDT12 (via ANK repeats). As to expression, expressed at relatively higher levels in the stomach, esophagus, spleen, thymus and testis, and at lower levels in the skin, lung and skeletal muscle.

Its subcellular location is the cytoplasm. The protein resides in the cytoplasmic granule. The catalysed reaction is Inactivates bleomycin B2 (a cytotoxic glycometallopeptide) by hydrolysis of a carboxyamide bond of beta-aminoalanine, but also shows general aminopeptidase activity. The specificity varies somewhat with source, but amino acid arylamides of Met, Leu and Ala are preferred.. In terms of biological role, the normal physiological role of BLM hydrolase is unknown, but it catalyzes the inactivation of the antitumor drug BLM (a glycopeptide) by hydrolyzing the carboxamide bond of its B-aminoalaninamide moiety thus protecting normal and malignant cells from BLM toxicity. Binds single-stranded DNA with higher affinity than double-stranded DNA. May play an important role in the metabolism of antibiotics. The polypeptide is Bleomycin hydrolase (Blmh) (Rattus norvegicus (Rat)).